The primary structure comprises 593 residues: Corrinoid activation enzyme RamQ (593 aa).

The 2Fe-2S ferredoxin-type domain occupies 1–76; sequence MRVLFPLLEE…GMEIYASREQ (76 aa). Residues Cys-35, Cys-41, Cys-44, and Cys-60 each coordinate [2Fe-2S] cluster.

It depends on [2Fe-2S] cluster as a cofactor.

Involved in the degradation of the quaternary amines L-proline betaine and L-carnitine. Component of a corrinoid-dependent methyltransferase system that transfers a methyl group from L-proline betaine or L-carnitine to tetrahydrofolate (THF), forming methyl-THF, a key intermediate in the Wood-Ljungdahl acetogenesis pathway. RamQ is not required for the methyl transfer, but it stimulates reduction of reconstituted MtqC from the Co(II) state to the Co(I) state in vitro. It also stimulates the rate of THF methylation. This Eubacterium limosum protein is Corrinoid activation enzyme RamQ.